The chain runs to 557 residues: Vanadium-dependent bromoperoxidase (557 aa).

Gln1 carries the pyrrolidone carboxylic acid modification. The interval 1-22 (QTCSTSDDADDPTPPNERDDEA) is disordered. A disulfide bond links Cys77 and Cys86. Vanadate contacts are provided by Lys341 and Arg349. The active site involves His411. 3 residues coordinate vanadate: Ser416, Gly417, and His418. The active site involves His418. A disulfide bridge connects residues Cys441 and Cys462. Positions 480 and 486 each coordinate vanadate. Cys544 and Cys555 are oxidised to a cystine.

The protein belongs to the vanadium-dependent haloperoxidase family. As to quaternary structure, homodimer; disulfide-linked. The cofactor is vanadate.

It carries out the reaction RH + Br(-) + H2O2 = RBr + 2 H2O.. Catalyzes the halogenation of organic substrates in the presence of hydrogen peroxide. In Ascophyllum nodosum (Knotted wrack), this protein is Vanadium-dependent bromoperoxidase.